A 239-amino-acid chain; its full sequence is MKIFPAIDIKDKKCVRLIKGDFNNKTEYEISPVDQAGKYKDHGFKNLHIVDLDGALTGETVNLDIIKEIVHKFDLKIEVGGGVRSIDSIEKYINAGVEKVILGSAAIKNKNFLKEACQKFPNKIALGLDAKDGYLSVSGWKENSNQLTLDFLKEVNDYGASRLIYTDINRDGTKESPNFEETTNVANVSNCPVIISGGVSSIDDIKKAKGLKNIEGIIVGKAIYDGDIKLEELVKELDA.

Asp-8 serves as the catalytic Proton acceptor. The active-site Proton donor is the Asp-129.

This sequence belongs to the HisA/HisF family.

The protein resides in the cytoplasm. It catalyses the reaction 1-(5-phospho-beta-D-ribosyl)-5-[(5-phospho-beta-D-ribosylamino)methylideneamino]imidazole-4-carboxamide = 5-[(5-phospho-1-deoxy-D-ribulos-1-ylimino)methylamino]-1-(5-phospho-beta-D-ribosyl)imidazole-4-carboxamide. It functions in the pathway amino-acid biosynthesis; L-histidine biosynthesis; L-histidine from 5-phospho-alpha-D-ribose 1-diphosphate: step 4/9. In Pelagibacter ubique (strain HTCC1062), this protein is 1-(5-phosphoribosyl)-5-[(5-phosphoribosylamino)methylideneamino] imidazole-4-carboxamide isomerase.